A 102-amino-acid chain; its full sequence is Urease subunit beta (102 aa).

This sequence belongs to the urease beta subunit family. In terms of assembly, heterotrimer of UreA (gamma), UreB (beta) and UreC (alpha) subunits. Three heterotrimers associate to form the active enzyme.

It is found in the cytoplasm. The catalysed reaction is urea + 2 H2O + H(+) = hydrogencarbonate + 2 NH4(+). Its pathway is nitrogen metabolism; urea degradation; CO(2) and NH(3) from urea (urease route): step 1/1. This is Urease subunit beta from Bordetella pertussis (strain Tohama I / ATCC BAA-589 / NCTC 13251).